The following is a 161-amino-acid chain: UPF0178 protein BSUIS_A1819 (161 aa).

Belongs to the UPF0178 family.

The polypeptide is UPF0178 protein BSUIS_A1819 (Brucella suis (strain ATCC 23445 / NCTC 10510)).